A 592-amino-acid chain; its full sequence is Endoribonuclease Arlr (592 aa).

The N-terminal stretch at 1 to 24 (MRCLALSAVFLCLTLAGHFHLSDA) is a signal peptide. The segment at 83-329 (PTAANKPPPL…FQSSGNSVAT (247 aa)) is disordered. Residues 109–120 (PGSSPFGASQNP) are compositionally biased toward polar residues. Composition is skewed to low complexity over residues 134–144 (PSHPSQPSQPS) and 188–209 (GISS…TGKT). Pro residues-rich tracts occupy residues 234–249 (LPAP…PTPG) and 258–267 (LPTPQHPVHP). The span at 268 to 294 (PTKATSAATPTPTPTPSFSSSVTPTPA) shows a compositional bias: low complexity. The EndoU domain occupies 329–592 (TDDEIRQLTE…NLIGSAYPEI (264 aa)). Catalysis depends on residues histidine 473, histidine 488, and lysine 531.

The protein belongs to the ENDOU family. In terms of assembly, monomer. The cofactor is Mn(2+). In terms of tissue distribution, predominantly expressed in head. Expressed in fat body cells.

The protein resides in the endoplasmic reticulum lumen. The protein localises to the secreted. It carries out the reaction a ribonucleotidyl-ribonucleotide-RNA + H2O = a 3'-end 3'-phospho-ribonucleotide-RNA + a 5'-end dephospho-ribonucleoside-RNA + H(+). Functionally, endoribonuclease that cleaves single-stranded RNAs; unlike its paralog EndoU it does not appear to preferentially cleave at uridylates and releases linear products instead of products that have 2'-3'-cyclic phosphate termini. Preferentially cleaves single stranded RNA at sites with AU, UC and poly-U sites cleaved less efficiently. Targets mRNAs encoding proteins involved in lipid metabolism, particularly those involved in lipolysis, to regulate their expression. This Drosophila melanogaster (Fruit fly) protein is Endoribonuclease Arlr.